Here is a 1522-residue protein sequence, read N- to C-terminus: DNA topoisomerase 2-binding protein 1 (1522 aa).

BRCT domains lie at 101–189 (VYNM…RYTD) and 195–284 (FKCP…IYKT). Threonine 298 is subject to Phosphothreonine. Residue serine 301 is modified to Phosphoserine. 3 consecutive BRCT domains span residues 354-444 (APED…PYIH), 548-633 (TEEG…SNPL), and 641-738 (TGMT…HFLI). The tract at residues 756 to 891 (INLNSDTAEH…AVALSASPQL (136 aa)) is interaction with CIP2A. Threonine 779 and threonine 848 each carry phosphothreonine. The Nuclear localization signal motif lies at 852–858 (PSQQKRK). Serine 860 carries the phosphoserine modification. Position 861 is a phosphothreonine (threonine 861). Residues serine 864, serine 886, and serine 888 each carry the phosphoserine modification. Residues 900-991 (EAPKPLHKVV…KHLPESLYPH (92 aa)) enclose the BRCT 6 domain. A Phosphoserine modification is found at serine 1002. Residues 1018-1058 (VSSTKDDEPDPLILEENDVDNMATNNKESAPSNGSGKNDSK) are disordered. The span at 1024–1036 (DEPDPLILEENDV) shows a compositional bias: acidic residues. The span at 1039–1058 (MATNNKESAPSNGSGKNDSK) shows a compositional bias: polar residues. Threonine 1062 and threonine 1064 each carry phosphothreonine. A compositionally biased stretch (polar residues) spans 1083-1114 (SIVKPQGQRTSLSRSGCNSASSTPDSTRSARS). The tract at residues 1083–1118 (SIVKPQGQRTSLSRSGCNSASSTPDSTRSARSGRSR) is disordered. BRCT domains are found at residues 1259–1351 (ETHE…DYEW) and 1389–1486 (IVEG…NYCL). A disordered region spans residues 1501–1522 (TGLSQKRKAPTEKNKIKRPRVH). Residue serine 1504 is modified to Phosphoserine. The Nuclear localization signal signature appears at 1517-1520 (KRPR).

It belongs to the TOPBP1 family. In terms of assembly, interacts (via BRCT domains 1 and 2) with (phosphorylated) MDC1; promoting TOPBP1 recruitment to DNA damage sites during mitosis. Interacts (via BRCT domains 7 and 8) with (autophosphorylated) ATR; promoting activation of ATR. Interacts (via BRCT domains 7 and 8) with (phosphorylated) POLQ; specifically binds POLQ phosphorylated by PLK1, promoting POLQ recruitment to DNA damage sites. Interacts (via BRCT domains 1 and 2) with (phosphorylated) RAD9A. Interacts (via BRCT domain 2) with (phosphorylated) TP53BP1. Interacts (via BRCT domain 2) with (phosphorylated) HTATSF1. Interacts (via BRCT domains 7 and 8) with (phosphorylated) RAD51; promoting RAD51 recruitment to damaged chromatin. Interacts with CIP2A; forming the CIP2A-TOPBP1 complex. Interacts with POLE. Interacts with UBR5. Interacts with E2F1. Interacts with PML. Interacts with SMARCA2. Interacts with SMARCA4. Interacts with RHNO1. May interact with TOP2B. Interacts with TICRR. Interacts with HELB. Interacts (via residues 1233-1522) with RECQL4. Phosphorylated on serine and threonine residues in response to X-ray irradiation. Post-translationally, ubiquitinated and degraded by the proteasome. X-ray irradiation reduces ubiquitination. Deubiquitinated by USP13; leading to TOPBP1 stabilizion and activation of the ATR-TOPBP1 axis pathway. In terms of tissue distribution, highly expressed in heart, brain, placenta, lung and kidney.

It localises to the nucleus. The protein localises to the chromosome. The protein resides in the cytoplasm. Its subcellular location is the cytoskeleton. It is found in the microtubule organizing center. It localises to the centrosome. The protein localises to the spindle pole. In terms of biological role, scaffold protein that acts as a key protein-protein adapter in DNA replication and DNA repair. Composed of multiple BRCT domains, which specifically recognize and bind phosphorylated proteins, bringing proteins together into functional combinations. Required for DNA replication initiation but not for the formation of pre-replicative complexes or the elongation stages. Necessary for the loading of replication factors onto chromatin, including GMNC, CDC45, DNA polymerases and components of the GINS complex. Plays a central role in DNA repair by bridging proteins and promoting recruitment of proteins to DNA damage sites. Involved in double-strand break (DSB) repair via homologous recombination in S-phase by promoting the exchange between the DNA replication factor A (RPA) complex and RAD51. Mechanistically, TOPBP1 is recruited to DNA damage sites in S-phase via interaction with phosphorylated HTATSF1, and promotes the loading of RAD51, thereby facilitating RAD51 nucleofilaments formation and RPA displacement, followed by homologous recombination. Involved in microhomology-mediated end-joining (MMEJ) DNA repair by promoting recruitment of polymerase theta (POLQ) to DNA damage sites during mitosis. MMEJ is an alternative non-homologous end-joining (NHEJ) machinery that takes place during mitosis to repair DSBs in DNA that originate in S-phase. Recognizes and binds POLQ phosphorylated by PLK1, enabling its recruitment to DSBs for subsequent repair. Involved in G1 DNA damage checkpoint by acting as a molecular adapter that couples TP53BP1 and the 9-1-1 complex. In response to DNA damage, triggers the recruitment of checkpoint signaling proteins on chromatin, which activate the CHEK1 signaling pathway and block S-phase progression. Acts as an activator of the kinase activity of ATR. Also required for chromosomal stability when DSBs occur during mitosis by forming filamentous assemblies that bridge MDC1 and tether broken chromosomes during mitosis. Together with CIP2A, plays an essential role in the response to genome instability generated by the presence of acentric chromosome fragments derived from shattered chromosomes within micronuclei. Micronuclei, which are frequently found in cancer cells, consist of chromatin surrounded by their own nuclear membrane: following breakdown of the micronuclear envelope, a process associated with chromothripsis, the CIP2A-TOPBP1 complex tethers chromosome fragments during mitosis to ensure clustered segregation of the fragments to a single daughter cell nucleus, facilitating re-ligation with limited chromosome scattering and loss. Recruits the SWI/SNF chromatin remodeling complex to E2F1-responsive promoters, thereby down-regulating E2F1 activity and inhibiting E2F1-dependent apoptosis during G1/S transition and after DNA damage. This is DNA topoisomerase 2-binding protein 1 from Homo sapiens (Human).